The following is a 63-amino-acid chain: Adipokinetic prohormone type 1 (63 aa).

An N-terminal signal peptide occupies residues 1–22 (MVQRCALVVLLVVAVAAALCSA). Glutamine 23 carries the pyrrolidone carboxylic acid modification. At threonine 32 the chain carries Threonine amide.

Belongs to the AKH/HRTH/RPCH family.

It localises to the secreted. Functionally, this hormone, released from cells in the corpora cardiaca, causes release of diglycerides from the fat body and stimulation of muscles to use these diglycerides as an energy source during energy-demanding processes. The polypeptide is Adipokinetic prohormone type 1 (Locusta migratoria (Migratory locust)).